The chain runs to 488 residues: Histone deacetylase 2 (488 aa).

Residues 9–322 (KKKVCYYYDG…WTYETAVALD (314 aa)) are histone deacetylase. Gly-28 and Lys-32 together coordinate 1D-myo-inositol 1,4,5,6-tetrakisphosphate. Residue His-142 is part of the active site. The Zn(2+) site is built by Asp-177, His-179, and Asp-265. 1D-myo-inositol 1,4,5,6-tetrakisphosphate is bound at residue Arg-271. Positions 389–488 (AVHEDSGDED…GAKSEQLSNP (100 aa)) are disordered. Positions 402-417 (PDKRISIRASDKRIAC) are enriched in basic and acidic residues. Positions 418-428 (DEEFSDSEDEG) are enriched in acidic residues. Positions 429–481 (EGGRRNVADHKKGAKKARIEEDKKETEDKKADVKEEDKSKDNSGEKTDTKGAK) are enriched in basic and acidic residues.

It belongs to the histone deacetylase family. HD type 1 subfamily. The cofactor is Zn(2+).

The protein resides in the nucleus. Its subcellular location is the cytoplasm. The catalysed reaction is N(6)-acetyl-L-lysyl-[histone] + H2O = L-lysyl-[histone] + acetate. It catalyses the reaction N(6)-acetyl-L-lysyl-[protein] + H2O = L-lysyl-[protein] + acetate. It carries out the reaction N(6)-(2E)-butenoyl-L-lysyl-[protein] + H2O = (2E)-2-butenoate + L-lysyl-[protein]. The enzyme catalyses N(6)-(2-hydroxyisobutanoyl)-L-lysyl-[protein] + H2O = 2-hydroxy-2-methylpropanoate + L-lysyl-[protein]. The catalysed reaction is N(6)-[(S)-lactoyl]-L-lysyl-[protein] + H2O = (S)-lactate + L-lysyl-[protein]. With respect to regulation, inositol tetraphosphate (1D-myo-inositol 1,4,5,6-tetrakisphosphate) may act as an intermolecular glue between HDAC2 and N-Cor repressor complex components. Its function is as follows. Histone deacetylase that catalyzes the deacetylation of lysine residues on the N-terminal part of the core histones (H2A, H2B, H3 and H4). Histone deacetylation gives a tag for epigenetic repression and plays an important role in transcriptional regulation, cell cycle progression and developmental events. Histone deacetylases act via the formation of large multiprotein complexes. Also deacetylates non-histone proteins. In addition to protein deacetylase activity, also acts as a protein-lysine deacylase by recognizing other acyl groups: catalyzes removal of (2E)-butenoyl (crotonyl), lactoyl (lactyl) and 2-hydroxyisobutanoyl (2-hydroxyisobutyryl) acyl groups from lysine residues, leading to protein decrotonylation, delactylation and de-2-hydroxyisobutyrylation, respectively. The sequence is that of Histone deacetylase 2 (HDAC2) from Gallus gallus (Chicken).